The primary structure comprises 279 residues: Large ribosomal subunit protein uL2 (279 aa).

Disordered regions lie at residues 29–49 and 202–279; these read PVKQ…NGRV and NASI…KKKG. Residues 36-49 are compositionally biased toward low complexity; the sequence is GKSSSGGRNNNGRV. Over residues 209–220 the composition is skewed to basic residues; sequence GRSRWLGRRPHN.

This sequence belongs to the universal ribosomal protein uL2 family. As to quaternary structure, part of the 50S ribosomal subunit. Forms a bridge to the 30S subunit in the 70S ribosome.

Its function is as follows. One of the primary rRNA binding proteins. Required for association of the 30S and 50S subunits to form the 70S ribosome, for tRNA binding and peptide bond formation. It has been suggested to have peptidyltransferase activity; this is somewhat controversial. Makes several contacts with the 16S rRNA in the 70S ribosome. The chain is Large ribosomal subunit protein uL2 from Beijerinckia indica subsp. indica (strain ATCC 9039 / DSM 1715 / NCIMB 8712).